The chain runs to 245 residues: 1-(5-phosphoribosyl)-5-[(5-phosphoribosylamino)methylideneamino] imidazole-4-carboxamide isomerase (245 aa).

The active-site Proton acceptor is aspartate 8. Aspartate 131 acts as the Proton donor in catalysis.

This sequence belongs to the HisA/HisF family.

The protein resides in the cytoplasm. It carries out the reaction 1-(5-phospho-beta-D-ribosyl)-5-[(5-phospho-beta-D-ribosylamino)methylideneamino]imidazole-4-carboxamide = 5-[(5-phospho-1-deoxy-D-ribulos-1-ylimino)methylamino]-1-(5-phospho-beta-D-ribosyl)imidazole-4-carboxamide. It participates in amino-acid biosynthesis; L-histidine biosynthesis; L-histidine from 5-phospho-alpha-D-ribose 1-diphosphate: step 4/9. This is 1-(5-phosphoribosyl)-5-[(5-phosphoribosylamino)methylideneamino] imidazole-4-carboxamide isomerase from Neisseria gonorrhoeae (strain NCCP11945).